The sequence spans 160 residues: 6,7-dimethyl-8-ribityllumazine synthase (160 aa).

5-amino-6-(D-ribitylamino)uracil is bound by residues Phe23, 61 to 63 (SFE), and 85 to 87 (AVI). 90–91 (DT) is a binding site for (2S)-2-hydroxy-3-oxobutyl phosphate. Residue His93 is the Proton donor of the active site. Phe118 is a binding site for 5-amino-6-(D-ribitylamino)uracil. Arg132 serves as a coordination point for (2S)-2-hydroxy-3-oxobutyl phosphate.

It belongs to the DMRL synthase family.

The enzyme catalyses (2S)-2-hydroxy-3-oxobutyl phosphate + 5-amino-6-(D-ribitylamino)uracil = 6,7-dimethyl-8-(1-D-ribityl)lumazine + phosphate + 2 H2O + H(+). It functions in the pathway cofactor biosynthesis; riboflavin biosynthesis; riboflavin from 2-hydroxy-3-oxobutyl phosphate and 5-amino-6-(D-ribitylamino)uracil: step 1/2. Functionally, catalyzes the formation of 6,7-dimethyl-8-ribityllumazine by condensation of 5-amino-6-(D-ribitylamino)uracil with 3,4-dihydroxy-2-butanone 4-phosphate. This is the penultimate step in the biosynthesis of riboflavin. In Synechococcus sp. (strain CC9311), this protein is 6,7-dimethyl-8-ribityllumazine synthase.